The following is a 159-amino-acid chain: Transcriptional repressor NrdR (159 aa).

Positions 1 to 22 (MRCPFCGSEDTQVKDSRPAEDN) are disordered. A zinc finger spans residues 3–34 (CPFCGSEDTQVKDSRPAEDNTSIRRRRICPDC). The span at 11–22 (TQVKDSRPAEDN) shows a compositional bias: basic and acidic residues. In terms of domain architecture, ATP-cone spans 49 to 139 (LMVIKKSGRK…VYRDFSHAED (91 aa)).

Belongs to the NrdR family. The cofactor is Zn(2+).

Functionally, negatively regulates transcription of bacterial ribonucleotide reductase nrd genes and operons by binding to NrdR-boxes. The polypeptide is Transcriptional repressor NrdR (Agrobacterium fabrum (strain C58 / ATCC 33970) (Agrobacterium tumefaciens (strain C58))).